We begin with the raw amino-acid sequence, 94 residues long: Small ribosomal subunit protein bS6 (94 aa).

The protein belongs to the bacterial ribosomal protein bS6 family.

Its function is as follows. Binds together with bS18 to 16S ribosomal RNA. The chain is Small ribosomal subunit protein bS6 from Fusobacterium nucleatum subsp. nucleatum (strain ATCC 25586 / DSM 15643 / BCRC 10681 / CIP 101130 / JCM 8532 / KCTC 2640 / LMG 13131 / VPI 4355).